Here is a 204-residue protein sequence, read N- to C-terminus: tRNA (guanine-N(7)-)-methyltransferase (204 aa).

3 residues coordinate S-adenosyl-L-methionine: glutamate 36, glutamate 61, and aspartate 111. Aspartate 111 is an active-site residue. Substrate is bound by residues lysine 115, aspartate 147, and 177–180; that span reads TRFE.

The protein belongs to the class I-like SAM-binding methyltransferase superfamily. TrmB family.

It catalyses the reaction guanosine(46) in tRNA + S-adenosyl-L-methionine = N(7)-methylguanosine(46) in tRNA + S-adenosyl-L-homocysteine. It functions in the pathway tRNA modification; N(7)-methylguanine-tRNA biosynthesis. In terms of biological role, catalyzes the formation of N(7)-methylguanine at position 46 (m7G46) in tRNA. The chain is tRNA (guanine-N(7)-)-methyltransferase from Chlorobium phaeobacteroides (strain DSM 266 / SMG 266 / 2430).